Here is a 143-residue protein sequence, read N- to C-terminus: Small ribosomal subunit protein uS9 (143 aa).

Serine 2 carries the post-translational modification N-acetylserine. Positions 123 to 143 (MPEPKKFGGKGARSRYQKSYR) are disordered. Residues 134–143 (ARSRYQKSYR) show a composition bias toward basic residues.

It belongs to the universal ribosomal protein uS9 family.

This Maudiozyma exigua (Yeast) protein is Small ribosomal subunit protein uS9 (RPS16).